Reading from the N-terminus, the 433-residue chain is Enolase (433 aa).

Gln-163 provides a ligand contact to (2R)-2-phosphoglycerate. Glu-205 functions as the Proton donor in the catalytic mechanism. 3 residues coordinate Mg(2+): Asp-242, Glu-291, and Asp-318. Residues Lys-343, Arg-372, Ser-373, and Lys-394 each contribute to the (2R)-2-phosphoglycerate site. The active-site Proton acceptor is the Lys-343.

The protein belongs to the enolase family. It depends on Mg(2+) as a cofactor.

It localises to the cytoplasm. The protein localises to the secreted. The protein resides in the cell surface. The enzyme catalyses (2R)-2-phosphoglycerate = phosphoenolpyruvate + H2O. It functions in the pathway carbohydrate degradation; glycolysis; pyruvate from D-glyceraldehyde 3-phosphate: step 4/5. In terms of biological role, catalyzes the reversible conversion of 2-phosphoglycerate (2-PG) into phosphoenolpyruvate (PEP). It is essential for the degradation of carbohydrates via glycolysis. The sequence is that of Enolase from Methylibium petroleiphilum (strain ATCC BAA-1232 / LMG 22953 / PM1).